Reading from the N-terminus, the 1333-residue chain is snRNA-activating protein complex subunit 4 (1333 aa).

Residues 29–84 (HFEVSESSLSSDSEADSLPDEDLETAGAPILEEEGSSESSNDEEDPKDKALPEDPE) form a disordered region. 2 stretches are compositionally biased toward acidic residues: residues 41–52 (SEADSLPDEDLE) and 59–73 (LEEEGSSESSNDEED). Position 68 is a phosphoserine (serine 68). The segment at 84 to 133 (ETCLQLNMVYQEVIREKLAEVSQLLAQNQEQQEEILFDLSGTKCPKVKDG) is SNAPC5-binding. A Myb-like 1 domain is found at 250 to 288 (EEALLGNRLDSHDWEKISNINFEGARSAEEIRKFWQSSE). The 55-residue stretch at 289-343 (HPSISKQEWSTEEVERLKAIAATHGHLEWHLVAEELGTSRSAFQCLQKFQQYNKT) folds into the HTH myb-type 1 domain. The H-T-H motif DNA-binding region spans 317-341 (WHLVAEELGTSRSAFQCLQKFQQYN). Residues 344-395 (LKRKEWTEEEDHMLTQLVQEMRVGNHIPYRKIVYFMEGRDSMQLIYRWTKSL) enclose the Myb-like 2 domain. 2 HTH myb-type domains span residues 396–451 (DPSL…HFSL) and 452–503 (KKGR…RKKQ). DNA-binding regions (H-T-H motif) lie at residues 424 to 447 (WFKIREEVPGRSDAQCRDRYIRRL) and 476 to 499 (WARIASELPHRSGSQCLSKWKILA). Basic residues predominate over residues 503-515 (QHLQRKRGQRPRH). Disordered regions lie at residues 503 to 558 (QHLQ…LEKS), 662 to 702 (LMKE…QNKQ), 811 to 842 (NAKNNTGCLPSMTGEQTAKRASHKGRPRLGSC), and 1079 to 1117 (LPSPAKTPAFLEQPPASTDTEPKGPQGQEIPPTPGPEKA). Over residues 516 to 546 (SSQWSSSGSSSSSSEDYGSSSGSDGSSGSEN) the composition is skewed to low complexity. 2 stretches are compositionally biased toward polar residues: residues 672 to 686 (LPSSRSGSDPGNNTA) and 811 to 826 (NAKNNTGCLPSMTGEQ). An SNAPC2-binding region spans residues 1131 to 1247 (AIVTWLKGCQ…NSIPTTLSPD (117 aa)). Phosphoserine occurs at positions 1252, 1254, 1301, and 1309. The interval 1282–1333 (PAAPDPVQSHLVSPGQRAPSPGEVSAPSPLDASDGLDDLNVLRTRRARHSRR) is disordered. Positions 1324-1333 (RTRRARHSRR) are enriched in basic residues.

Part of the SNAPc composed of 5 subunits: SNAPC1, SNAPC2, SNAPC3, SNAPC4 and SNAPC5. SNAPC4 interacts with SNAPC1, SNAPC2, SNAPC5, BRF2 and TBP.

It is found in the nucleus. Part of the SNAPc complex required for the transcription of both RNA polymerase II and III small-nuclear RNA genes. Binds to the proximal sequence element (PSE), a non-TATA-box basal promoter element common to these 2 types of genes. Recruits TBP and BRF2 to the U6 snRNA TATA box. The protein is snRNA-activating protein complex subunit 4 of Mus musculus (Mouse).